The chain runs to 434 residues: Enolase (434 aa).

Position 165 (glutamine 165) interacts with (2R)-2-phosphoglycerate. Residue glutamate 207 is the Proton donor of the active site. Positions 244, 291, and 318 each coordinate Mg(2+). Lysine 343, arginine 372, serine 373, and lysine 394 together coordinate (2R)-2-phosphoglycerate. Catalysis depends on lysine 343, which acts as the Proton acceptor.

The protein belongs to the enolase family. The cofactor is Mg(2+).

The protein localises to the cytoplasm. Its subcellular location is the secreted. It localises to the cell surface. It carries out the reaction (2R)-2-phosphoglycerate = phosphoenolpyruvate + H2O. It functions in the pathway carbohydrate degradation; glycolysis; pyruvate from D-glyceraldehyde 3-phosphate: step 4/5. In terms of biological role, catalyzes the reversible conversion of 2-phosphoglycerate (2-PG) into phosphoenolpyruvate (PEP). It is essential for the degradation of carbohydrates via glycolysis. The chain is Enolase from Staphylococcus saprophyticus subsp. saprophyticus (strain ATCC 15305 / DSM 20229 / NCIMB 8711 / NCTC 7292 / S-41).